Reading from the N-terminus, the 124-residue chain is Protein MGF 110-4L (124 aa).

Positions Met1–Arg28 are cleaved as a signal peptide. Asn64 is a glycosylation site (N-linked (GlcNAc...) asparagine; by host). The Prevents secretion from ER signature appears at Lys121–Leu124.

The protein belongs to the asfivirus MGF 110 family.

Its subcellular location is the virion. It is found in the host endoplasmic reticulum-Golgi intermediate compartment. In terms of biological role, causes the redistribution of lumenal ER protein to an enlarged ERGIC compartment. This is Protein MGF 110-4L from African swine fever virus (strain Badajoz 1971 Vero-adapted) (Ba71V).